The sequence spans 157 residues: Cytochrome P450 monooxygenase atG (157 aa).

Cys-97 lines the heme pocket.

Belongs to the cytochrome P450 family. Requires heme as cofactor.

It participates in secondary metabolite biosynthesis. Its function is as follows. Cytochrome P450 monooxygenase; part of the gene cluster that mediates the biosynthesis of terreic acid, a quinone epoxide inhibitor of Bruton's tyrosine kinase (BTK). The first step of the pathway is the synthesis of 6-methylsalicylic acid (6-MSA) by the 6-methylsalicylic acid synthase atX. In the biosynthesis of 6-MSA, atX utilizes one acetyl-CoA and three malonyl-CoAs as its substrates and catalyzes a series of programmed reactions including Claisen condensation, reduction, aldol cyclization, and the hydrolytic cleavage that yields 6-MSA. The 6-methylsalicylate 1-monooxygenase atA then catalyzes the decarboxylative hydroxylation of 6-MSA to 3-methylcatechol. The next step is the conversion of 3-methylcatechol to 3-methyl-1,2,4-benzenetriol by cytochrome P450 monooxygenase atE, which is enhanced by cytochrome P450 monooxygenase atG. Then, the epoxidase atD catalyzes the epoxidation and hydroxyl oxidation of 3-methyl-1,2,4-benzenetriol to terremutin. Lastly, GMC oxidoreductase atC oxidizes terremutin to terreic acid. This chain is Cytochrome P450 monooxygenase atG, found in Aspergillus terreus (strain NIH 2624 / FGSC A1156).